A 297-amino-acid polypeptide reads, in one-letter code: Ribosomal RNA small subunit methyltransferase H (297 aa).

Residues 30–32 (GGY), D48, F75, D96, and Q103 contribute to the S-adenosyl-L-methionine site.

This sequence belongs to the methyltransferase superfamily. RsmH family.

The protein resides in the cytoplasm. It catalyses the reaction cytidine(1402) in 16S rRNA + S-adenosyl-L-methionine = N(4)-methylcytidine(1402) in 16S rRNA + S-adenosyl-L-homocysteine + H(+). Specifically methylates the N4 position of cytidine in position 1402 (C1402) of 16S rRNA. The sequence is that of Ribosomal RNA small subunit methyltransferase H from Ehrlichia chaffeensis (strain ATCC CRL-10679 / Arkansas).